We begin with the raw amino-acid sequence, 318 residues long: Mitochondrial fission regulator 1 (318 aa).

Disordered stretches follow at residues 101–121 and 154–193; these read RPLRRQRSLPSLHQVEPAQQS and QEQSAQSTAPAPGGPPVPPPMVPVPPPPPPPPPCPTPSMQ. Residues 124-157 are a coiled coil; the sequence is VINDEAIQKISVLETELAKLRAQIAQIVQAQEQS. Positions 154-164 are enriched in low complexity; that stretch reads QEQSAQSTAPA. Pro residues predominate over residues 165–189; it reads PGGPPVPPPMVPVPPPPPPPPPCPT. Residues 168–296 form a necessary and sufficient to promote mitochondrial fission region; it reads PPVPPPMVPV…TFTFTAFENK (129 aa).

The protein belongs to the MTFR1 family.

Its subcellular location is the mitochondrion. May play a role in mitochondrial aerobic respiration. May also regulate mitochondrial organization and fission. This Danio rerio (Zebrafish) protein is Mitochondrial fission regulator 1 (mtfr1).